The primary structure comprises 339 residues: Phenylalanine--tRNA ligase alpha subunit (339 aa).

Residue Glu254 participates in Mg(2+) binding.

This sequence belongs to the class-II aminoacyl-tRNA synthetase family. Phe-tRNA synthetase alpha subunit type 1 subfamily. In terms of assembly, tetramer of two alpha and two beta subunits. Requires Mg(2+) as cofactor.

The protein localises to the cytoplasm. It carries out the reaction tRNA(Phe) + L-phenylalanine + ATP = L-phenylalanyl-tRNA(Phe) + AMP + diphosphate + H(+). The polypeptide is Phenylalanine--tRNA ligase alpha subunit (Clostridium tetani (strain Massachusetts / E88)).